We begin with the raw amino-acid sequence, 66 residues long: UPF0337 protein pc0632 (66 aa).

Belongs to the UPF0337 (CsbD) family.

The protein is UPF0337 protein pc0632 of Protochlamydia amoebophila (strain UWE25).